The chain runs to 372 residues: NAD(P)H-quinone oxidoreductase subunit 1 (372 aa).

The next 9 helical transmembrane spans lie at 27-47 (LLWLPLPMLMMLIVATVGVLV), 65-85 (PEYIGPLGILAPLADGLKLIF), 97-117 (WLFTLGPAVVVIPVFLSYIIV), 128-148 (LAMGVFLWIALSSIAPIGLLM), 176-196 (LALAVLAVAMMSNGLGTVEIV), 204-224 (ILSWNVWRQPIGFLVFWIAAL), 254-274 (FALFYLGAYVNLVLSALLVSV), 308-328 (VLGITMTLIKAYFFVFLAILL), and 347-367 (FLLPVGLVNLLLTAGLKLAFP).

It belongs to the complex I subunit 1 family. NDH-1 is composed of at least 11 different subunits.

The protein localises to the cellular thylakoid membrane. The enzyme catalyses a plastoquinone + NADH + (n+1) H(+)(in) = a plastoquinol + NAD(+) + n H(+)(out). It carries out the reaction a plastoquinone + NADPH + (n+1) H(+)(in) = a plastoquinol + NADP(+) + n H(+)(out). NDH-1 shuttles electrons from an unknown electron donor, via FMN and iron-sulfur (Fe-S) centers, to quinones in the respiratory and/or the photosynthetic chain. The immediate electron acceptor for the enzyme in this species is believed to be plastoquinone. Couples the redox reaction to proton translocation, and thus conserves the redox energy in a proton gradient. In Thermosynechococcus vestitus (strain NIES-2133 / IAM M-273 / BP-1), this protein is NAD(P)H-quinone oxidoreductase subunit 1.